The primary structure comprises 68 residues: Large ribosomal subunit protein bL32 (68 aa).

The protein belongs to the bacterial ribosomal protein bL32 family.

This Onion yellows phytoplasma (strain OY-M) protein is Large ribosomal subunit protein bL32.